We begin with the raw amino-acid sequence, 523 residues long: Sensory neuron membrane protein 1 (523 aa).

Residues 1-10 lie on the Cytoplasmic side of the membrane; the sequence is MRLARGIKYA. A helical transmembrane segment spans residues 11–31; sequence VIGAGVALFGVLFGWVMFPAI. At 32 to 458 the chain is on the extracellular side; that stretch reads LKSQLKKEMA…NQLFIPKRIV (427 aa). N-linked (GlcNAc...) asparagine glycosylation is found at Asn-67 and Asn-229. 3 disulfide bridges follow: Cys-268–Cys-333, Cys-297–Cys-352, and Cys-335–Cys-341. Asn-440 carries an N-linked (GlcNAc...) asparagine glycan. The chain crosses the membrane as a helical span at residues 459–479; sequence SVIRWWLLSFGMLAALGGVIF. The Cytoplasmic portion of the chain corresponds to 480-523; the sequence is HFKDDIMRIAIKGDSSVTKVNPEDGEQKDVSVIGQSHEPPKINM. Residues 499–523 are disordered; the sequence is VNPEDGEQKDVSVIGQSHEPPKINM.

It belongs to the CD36 family. Localizes to both male and female antennae but not the leg, wing, gut, head, or thoracic ganglia. Detected throughout the sensory epithelium, associating with both sex-pheromone sensilla and plant-volatile sensilla. Differentially expressed both among different sensilla and different neurons within a given sensillum. Expression coincides with that of several other olfactory-specific proteins that are involved in odor detection.

It localises to the cell membrane. In terms of biological role, plays an olfactory role that is not restricted to pheromone sensitivity. This Manduca sexta (Tobacco hawkmoth) protein is Sensory neuron membrane protein 1.